Reading from the N-terminus, the 418-residue chain is Type II methyltransferase M.MspI (418 aa).

The SAM-dependent MTase C5-type domain occupies 105–404; it reads FKFIDLFSGI…EQISLALKTV (300 aa). C174 is an active-site residue.

It belongs to the class I-like SAM-binding methyltransferase superfamily. C5-methyltransferase family.

The catalysed reaction is a 2'-deoxycytidine in DNA + S-adenosyl-L-methionine = a 5-methyl-2'-deoxycytidine in DNA + S-adenosyl-L-homocysteine + H(+). Its function is as follows. A methylase, recognizes the double-stranded sequence 5'-CCGG-3', methylates C-1 on both strands, and protects the DNA from cleavage by the MspI endonuclease. The sequence is that of Type II methyltransferase M.MspI (mspIM) from Moraxella sp.